The sequence spans 128 residues: Large ribosomal subunit protein bL19 (128 aa).

This sequence belongs to the bacterial ribosomal protein bL19 family.

This protein is located at the 30S-50S ribosomal subunit interface and may play a role in the structure and function of the aminoacyl-tRNA binding site. The sequence is that of Large ribosomal subunit protein bL19 from Aromatoleum aromaticum (strain DSM 19018 / LMG 30748 / EbN1) (Azoarcus sp. (strain EbN1)).